Reading from the N-terminus, the 312-residue chain is MAIKRKKISVIGAGFTGATTAFLLAKKELGDVVLVDIPQAENPTKGKALDMLESSPVLGFDANIIGTSNYEETADSDIVVITAGIARKPGMSRDDLVQTNQKVMKSVTKEVVKYSPNSIIIVLTNPVDAMTYTVYKESGFPKHRVIGQSGVLDTARFRTFVAQELNLSVKDITGFVLGGHGDDMVPLVRYSYAGGIPLEKLIPKERLEAIVERTRKGGGEIVNLLGNGSAYYAPAASLVEMVEAIVKDQRRVLPAIAYLEGEYGFEGIYLGVPTILGGNGLEQIIELELTDEEKAALEKSAESVRNVMKALI.

Residues 12-17 (GAGFTG) and D36 contribute to the NAD(+) site. Residues R87 and R93 each coordinate substrate. Residues N100 and 123–125 (LTN) each bind NAD(+). N125 lines the substrate pocket. S149 carries the post-translational modification Phosphoserine. Position 156 (R156) interacts with substrate. Residue H180 is the Proton acceptor of the active site.

Belongs to the LDH/MDH superfamily. MDH type 3 family. As to quaternary structure, homotetramer.

It catalyses the reaction (S)-malate + NAD(+) = oxaloacetate + NADH + H(+). In terms of biological role, catalyzes the reversible oxidation of malate to oxaloacetate. The sequence is that of Malate dehydrogenase from Bacillus israeli.